The primary structure comprises 651 residues: Histone-arginine methyltransferase CARM1 (651 aa).

An interaction with C9orf72 region spans residues 28-139 (ATVSVFPGAR…GHTLERSVFS (112 aa)). Positions 147–454 (AVQYFQFYGY…KRQSYDISIV (308 aa)) constitute an SAM-dependent MTase PRMT-type domain. Residues Gln160, Arg169, Gly193, and Glu215 each contribute to the S-adenosyl-L-methionine site. Ser217 carries the phosphoserine modification. Lys228 is covalently cross-linked (Glycyl lysine isopeptide (Lys-Gly) (interchain with G-Cter in ubiquitin)). The S-adenosyl-L-methionine site is built by Glu244 and Ser272. Residues 347–380 (RILMAKSVKYTVNFLEAKEGDLHRIEIPFKFHML) are required for nuclear translocation. The interval 500-651 (TGSTYNLSSG…IPTNTMHYGS (152 aa)) is transactivation domain. The residue at position 551 (Arg551) is a Dimethylated arginine. Residues 581 to 617 (RSSYQWGPGRLRGHAGSSVPMTCPTGSSGAQGGGGSS) are disordered.

This sequence belongs to the class I-like SAM-binding methyltransferase superfamily. Protein arginine N-methyltransferase family. As to quaternary structure, homodimer. Interacts with NR1H4. Interacts with SNRPC. Interacts with the C-terminus of NCOA2/GRIP1, NCO3/ACTR and NCOA1/SRC1. Part of a complex consisting of CARM1, EP300/P300 and NCOA2/GRIP1. Interacts with FLII, TP53, myogenic factor MEF2, EP300/P300, TRIM24, CREBBP and CTNNB1. Interacts with RELA. Identified in a complex containing CARM1, TRIM24 and NCOA2/GRIP1. Interacts with NCOA3/SRC3. Interacts with SKP2. Interacts (via PH domain-like fold) with C9orf72. Interacts with PARP1; promoting PARP1 recruimtent to replication forks. In terms of processing, auto-methylated on Arg-551. Methylation enhances transcription coactivator activity. Methylation is required for its role in the regulation of pre-mRNA alternative splicing. Phosphorylation at Ser-217 interferes with S-adenosyl-L-methionine binding and strongly reduces methyltransferase activity. Phosphorylation at Ser-217 is strongly increased during mitosis, and decreases rapidly to a very low, basal level after entry into the G1 phase of the cell cycle. Phosphorylation at Ser-217 may promote location in the cytosol. Post-translationally, ubiquitinated by E3 ubiquitin-protein ligase complex containing FBXO9 at Lys-228; leading to proteasomal degradation. In terms of tissue distribution, isoform 1 is expressed at low levels in brain, liver and testis. As to expression, isoform 2 is highly expressed in brain, liver, skeletal muscle and testis. Isoform 3 is highly expressed in spleen, liver and kidney. In terms of tissue distribution, isoform 4 is expressed in spleen, liver and kidney.

It localises to the nucleus. The protein localises to the cytoplasm. The protein resides in the chromosome. The catalysed reaction is L-arginyl-[protein] + 2 S-adenosyl-L-methionine = N(omega),N(omega)-dimethyl-L-arginyl-[protein] + 2 S-adenosyl-L-homocysteine + 2 H(+). Methylation of H3R17 (H3R17me) by CARM1 is stimulated by preacetylation of H3 'Lys-18' (H3K18ac) H3 'Lys-23' (H3K23ac) by EP300 and blocked by citrullination of H3 'Arg-17' (H3R17ci) by PADI4. In terms of biological role, methylates (mono- and asymmetric dimethylation) the guanidino nitrogens of arginyl residues in several proteins involved in DNA packaging, transcription regulation, pre-mRNA splicing, and mRNA stability. Recruited to promoters upon gene activation together with histone acetyltransferases from EP300/P300 and p160 families, methylates histone H3 at 'Arg-17' (H3R17me), forming mainly asymmetric dimethylarginine (H3R17me2a), leading to activation of transcription via chromatin remodeling. During nuclear hormone receptor activation and TCF7L2/TCF4 activation, acts synergically with EP300/P300 and either one of the p160 histone acetyltransferases NCOA1/SRC1, NCOA2/GRIP1 and NCOA3/ACTR or CTNNB1/beta-catenin to activate transcription. During myogenic transcriptional activation, acts together with NCOA3/ACTR as a coactivator for MEF2C. During monocyte inflammatory stimulation, acts together with EP300/P300 as a coactivator for NF-kappa-B. Acts as a coactivator for PPARG, promotes adipocyte differentiation and the accumulation of brown fat tissue. Plays a role in the regulation of pre-mRNA alternative splicing by methylation of splicing factors. Also seems to be involved in p53/TP53 transcriptional activation. Methylates EP300/P300, both at 'Arg-2142', which may loosen its interaction with NCOA2/GRIP1, and at 'Arg-580' and 'Arg-604' in the KIX domain, which impairs its interaction with CREB and inhibits CREB-dependent transcriptional activation. Also methylates arginine residues in RNA-binding proteins PABPC1, ELAVL1 and ELAV4, which may affect their mRNA-stabilizing properties and the half-life of their target mRNAs. Acts as a transcriptional coactivator of ACACA/acetyl-CoA carboxylase by enriching H3R17 methylation at its promoter, thereby positively regulating fatty acid synthesis. Independently of its methyltransferase activity, involved in replication fork progression: promotes PARP1 recruitment to replication forks, leading to poly-ADP-ribosylation of chromatin at replication forks and reduced fork speed. Isoform 3 specifically affects pre-mRNA splicing. This activity is independent from methyltransferase activity. The sequence is that of Histone-arginine methyltransferase CARM1 (Carm1) from Rattus norvegicus (Rat).